The primary structure comprises 298 residues: Tyrosine recombinase XerC (298 aa).

The region spanning 1–84 (MNHIQEAFLN…TLRTFYEYWM (84 aa)) is the Core-binding (CB) domain. Residues 105-286 (YLPQFFYEEE…SNQQLRKVYL (182 aa)) enclose the Tyr recombinase domain. Catalysis depends on residues Arg-145, Lys-169, His-238, Arg-241, and His-264. Tyr-273 acts as the O-(3'-phospho-DNA)-tyrosine intermediate in catalysis.

It belongs to the 'phage' integrase family. XerC subfamily. As to quaternary structure, forms a cyclic heterotetrameric complex composed of two molecules of XerC and two molecules of XerD.

Its subcellular location is the cytoplasm. Functionally, site-specific tyrosine recombinase, which acts by catalyzing the cutting and rejoining of the recombining DNA molecules. The XerC-XerD complex is essential to convert dimers of the bacterial chromosome into monomers to permit their segregation at cell division. It also contributes to the segregational stability of plasmids. The chain is Tyrosine recombinase XerC from Staphylococcus aureus (strain JH1).